The sequence spans 120 residues: Spermidine export protein MdtJ (120 aa).

4 helical membrane-spanning segments follow: residues 1–21 (MFYWILLALAIVAEITGTLSM), 31–51 (AGYILMLVMITLSYIFLSFAV), 54–74 (IALGVAYALWEGIGILFITVF), and 81–101 (EVLSTMKIVGLLTLIVGIVLI).

This sequence belongs to the drug/metabolite transporter (DMT) superfamily. Small multidrug resistance (SMR) (TC 2.A.7.1) family. MdtJ subfamily. Forms a complex with MdtI.

The protein resides in the cell inner membrane. Its function is as follows. Catalyzes the excretion of spermidine. This chain is Spermidine export protein MdtJ, found in Salmonella arizonae (strain ATCC BAA-731 / CDC346-86 / RSK2980).